The following is a 51-amino-acid chain: Otoconin-90 (51 aa).

Belongs to the phospholipase A2 family. Interacts with OTOL1.

The protein resides in the secreted. Major protein of the otoconia, a calcium carbonate structure in the saccule and utricle of the ear. Together with OTOL1, acts as a scaffold for otoconia biomineralization: sequesters calcium and forms interconnecting fibrils between otoconia that are incorporated into the calcium crystal structure. Together with OTOL1, modulates calcite crystal morphology and growth kinetics. It is unlikely that this protein has phospholipase A2 activity. This chain is Otoconin-90 (OC90), found in Cavia porcellus (Guinea pig).